Reading from the N-terminus, the 562-residue chain is Aureusidin synthase (562 aa).

2 disulfide bridges follow: Cys-71/Cys-86 and Cys-85/Cys-148. Residues His-147, His-168, His-177, His-301, His-305, and His-335 each contribute to the Cu cation site. The 2'-(S-cysteinyl)-histidine (Cys-His) cross-link spans Cys-151–His-168.

Belongs to the tyrosinase family. As to quaternary structure, monomer. Requires Cu(2+) as cofactor. Post-translationally, glycosylated. In terms of processing, contains probably N- and C-terminal propeptides. As to expression, expressed in petals. Not detected in stems and leaves.

The protein localises to the vacuole lumen. The catalysed reaction is 2',4,4',6'-tetrahydroxychalcone 4'-O-beta-D-glucoside + O2 = aureusidin 6-O-beta-glucoside + H2O. It carries out the reaction 2 2',3,4,4',6'-pentahydroxychalcone 4'-O-beta-D-glucoside + O2 + 2 H(+) = 2 aureusidin 6-O-beta-glucoside + 2 H2O. It catalyses the reaction 2',3,4,4',6'-pentahydroxychalcone 4'-O-beta-D-glucoside + O2 + H(+) = bracteatin 6-O-beta-glucoside + H2O. With respect to regulation, h(2)O(2) activates the 3-hydroxylation and oxidative cyclization of tetrahydroxychalcone but inhibits reaction with pentahydroxychalcone. Inhibited by phenylthiourea. Involved in the biosynthesis of aurones, plant flavonoids that provide yellow coloration to flowers. Can use tetrahydroxychalcone (THC), pentahydroxychalcone (PHC), THC 4'-glucoside and PHC 4'-glucoside as substrates, but not 2'-hydroxychalcone, 4-hydroxychalcone, PHC 3-glucoside, 2',6'-dihydroxy-4,4'-dimethoxychalcone, naringenin, eriodictyol and 4,4',6-trihydroxyaurone. Can also produce bracteatin from PHC. This is Aureusidin synthase (AS1) from Antirrhinum majus (Garden snapdragon).